Reading from the N-terminus, the 363-residue chain is Carbamoyl phosphate synthase small chain (363 aa).

CPSase stretches follow at residues 1-168 (MTKR…ASPG) and 1-172 (MTKR…DGKR). Ser-46, Gly-220, and Gly-222 together coordinate L-glutamine. Residues 172–359 (RVVLVDYGVK…MEMMNVKEEG (188 aa)) enclose the Glutamine amidotransferase type-1 domain. The active-site Nucleophile is the Cys-247. L-glutamine contacts are provided by Leu-248, Gln-251, Asn-289, Gly-291, and Tyr-292. Active-site residues include His-332 and Glu-334.

This sequence belongs to the CarA family. In terms of assembly, composed of two chains; the small (or glutamine) chain promotes the hydrolysis of glutamine to ammonia, which is used by the large (or ammonia) chain to synthesize carbamoyl phosphate. Tetramer of heterodimers (alpha,beta)4.

It catalyses the reaction hydrogencarbonate + L-glutamine + 2 ATP + H2O = carbamoyl phosphate + L-glutamate + 2 ADP + phosphate + 2 H(+). The enzyme catalyses L-glutamine + H2O = L-glutamate + NH4(+). It participates in amino-acid biosynthesis; L-arginine biosynthesis; carbamoyl phosphate from bicarbonate: step 1/1. It functions in the pathway pyrimidine metabolism; UMP biosynthesis via de novo pathway; (S)-dihydroorotate from bicarbonate: step 1/3. Functionally, small subunit of the glutamine-dependent carbamoyl phosphate synthetase (CPSase). CPSase catalyzes the formation of carbamoyl phosphate from the ammonia moiety of glutamine, carbonate, and phosphate donated by ATP, constituting the first step of 2 biosynthetic pathways, one leading to arginine and/or urea and the other to pyrimidine nucleotides. The small subunit (glutamine amidotransferase) binds and cleaves glutamine to supply the large subunit with the substrate ammonia. In Listeria innocua serovar 6a (strain ATCC BAA-680 / CLIP 11262), this protein is Carbamoyl phosphate synthase small chain.